A 299-amino-acid polypeptide reads, in one-letter code: Circadian clock oscillator protein KaiA (299 aa).

The 169-residue stretch at 1-169 (MVSKLSLYLV…RLAEKLRERL (169 aa)) folds into the KaiA N-terminal domain. The psR domain, binds oxidized quinones stretch occupies residues 3-135 (SKLSLYLVTP…LHLAPSCALS (133 aa)). Positions 170–178 (GYLGVYYKR) are flexible linker. The 109-residue stretch at 179-287 (NPKYFYRSLS…CEMYRRSIPR (109 aa)) folds into the KaiA C-terminal domain.

Homodimer. The KaiABC complex composition changes during the circadian cycle to control KaiC phosphorylation. Complexes KaiC(6), KaiA(2-4):KaiC(6), KaiB(6):KaiC(6) and KaiC(6):KaiB(6):KaiA(12) are among the most important forms, many form cooperatively. KaiA and CikA bind to the same region of the KaiB(fs) form and therefore compete.

Key component of the KaiABC oscillator complex, which constitutes the main circadian regulator in cyanobacteria. Complex composition changes during the circadian cycle to control KaiC phosphorylation. KaiA stimulates KaiC autophosphorylation, while KaiB sequesters KaiA, leading to KaiC autodephosphorylation. KaiA binding to the KaiC CII domain during the subjective day yields KaiA(2-4):KaiC(6) complexes which stimulate KaiC autophosphorylation. Phospho-Ser-431 KaiC accumulation triggers binding of KaiB during the subjective night to form the KaiB(6):KaiC(6) complex, leading to changes in the output regulators CikA and SasA. KaiB(6):KaiC(6) formation exposes a site for KaiA binding on KaiB that sequesters KaiA from KaiC's CII domain, making the KaiC(6):KaiB(6):KaiA(12) complex resulting in KaiC autodephosphorylation. Complete dephosphorylation of KaiC leads to dissociation of KaiA(2):KaiB(1), completing 1 cycle of the Kai oscillator. Functionally, binds oxidized quinones via the N-terminal PsR domain, allowing it to sense redox changes and possibly mediate clock input. This is Circadian clock oscillator protein KaiA from Picosynechococcus sp. (strain ATCC 27264 / PCC 7002 / PR-6) (Agmenellum quadruplicatum).